The chain runs to 137 residues: Nucleoside diphosphate kinase (137 aa).

6 residues coordinate ATP: Lys-9, Phe-57, Arg-85, Thr-91, Arg-102, and Asn-112. His-115 serves as the catalytic Pros-phosphohistidine intermediate.

The protein belongs to the NDK family. Homotetramer. Requires Mg(2+) as cofactor.

The protein resides in the cytoplasm. The catalysed reaction is a 2'-deoxyribonucleoside 5'-diphosphate + ATP = a 2'-deoxyribonucleoside 5'-triphosphate + ADP. It carries out the reaction a ribonucleoside 5'-diphosphate + ATP = a ribonucleoside 5'-triphosphate + ADP. Its function is as follows. Major role in the synthesis of nucleoside triphosphates other than ATP. The ATP gamma phosphate is transferred to the NDP beta phosphate via a ping-pong mechanism, using a phosphorylated active-site intermediate. The polypeptide is Nucleoside diphosphate kinase (Sulfurovum sp. (strain NBC37-1)).